Here is a 475-residue protein sequence, read N- to C-terminus: ATP synthase subunit beta (475 aa).

161–168 (GGAGVGKT) contributes to the ATP binding site.

The protein belongs to the ATPase alpha/beta chains family. F-type ATPases have 2 components, CF(1) - the catalytic core - and CF(0) - the membrane proton channel. CF(1) has five subunits: alpha(3), beta(3), gamma(1), delta(1), epsilon(1). CF(0) has three main subunits: a(1), b(2) and c(9-12). The alpha and beta chains form an alternating ring which encloses part of the gamma chain. CF(1) is attached to CF(0) by a central stalk formed by the gamma and epsilon chains, while a peripheral stalk is formed by the delta and b chains.

The protein localises to the cell membrane. The catalysed reaction is ATP + H2O + 4 H(+)(in) = ADP + phosphate + 5 H(+)(out). Produces ATP from ADP in the presence of a proton gradient across the membrane. The catalytic sites are hosted primarily by the beta subunits. The sequence is that of ATP synthase subunit beta from Mycoplasma mycoides subsp. mycoides SC (strain CCUG 32753 / NCTC 10114 / PG1).